We begin with the raw amino-acid sequence, 200 residues long: Coiled-coil domain-containing protein 28B (200 aa).

The residue at position 1 (methionine 1) is an N-acetylmethionine. The segment covering 1 to 10 (MEDKKKKRSP) has biased composition (basic residues). Residues 1-49 (MEDKKKKRSPKPCLTQPAQAPGTLRRVPVPTSHSGSLALGLPHLPSPKQ) form a disordered region. A phosphoserine mark is found at serine 46 and serine 115. Over residues 140–152 (GEEEDEEEEEDGV) the composition is skewed to acidic residues. Residues 140-165 (GEEEDEEEEEDGVTEGLPEEQKKTMA) form a disordered region. A coiled-coil region spans residues 158 to 189 (EEQKKTMADRNLDQLLSNLEDLSNSIQKLHLA).

Interacts with BBS1, BBS2, BBS4, BBS5, BBS6, BBS7 and TTC8/BBS8. Interacts with MAPKAP1/SIN1 isoform 1 and RICTOR. As to expression, expressed in the retina, pericardium and limb epithelium.

It localises to the cytoplasm. The protein localises to the cytoskeleton. Its subcellular location is the microtubule organizing center. It is found in the centrosome. Functionally, involved in ciliogenesis. Regulates cilia length through its interaction with MAPKAP1/SIN1 but independently of mTORC2 complex. Modulates mTORC2 complex assembly and function, possibly enhances AKT1 phosphorylation. Does not seem to modulate assembly and function of mTORC1 complex. This is Coiled-coil domain-containing protein 28B (Ccdc28b) from Mus musculus (Mouse).